Reading from the N-terminus, the 79-residue chain is DNA-directed RNA polymerase subunit omega (79 aa).

This sequence belongs to the RNA polymerase subunit omega family. The RNAP catalytic core consists of 2 alpha, 1 beta, 1 beta' and 1 omega subunit. When a sigma factor is associated with the core the holoenzyme is formed, which can initiate transcription.

It carries out the reaction RNA(n) + a ribonucleoside 5'-triphosphate = RNA(n+1) + diphosphate. Its function is as follows. Promotes RNA polymerase assembly. Latches the N- and C-terminal regions of the beta' subunit thereby facilitating its interaction with the beta and alpha subunits. In Bdellovibrio bacteriovorus (strain ATCC 15356 / DSM 50701 / NCIMB 9529 / HD100), this protein is DNA-directed RNA polymerase subunit omega.